A 283-amino-acid polypeptide reads, in one-letter code: tRNA-cytidine(32) 2-sulfurtransferase (283 aa).

Positions 32–37 (SGGKDS) match the PP-loop motif motif. C107, C110, and C198 together coordinate [4Fe-4S] cluster.

It belongs to the TtcA family. Homodimer. Mg(2+) serves as cofactor. Requires [4Fe-4S] cluster as cofactor.

The protein localises to the cytoplasm. The enzyme catalyses cytidine(32) in tRNA + S-sulfanyl-L-cysteinyl-[cysteine desulfurase] + AH2 + ATP = 2-thiocytidine(32) in tRNA + L-cysteinyl-[cysteine desulfurase] + A + AMP + diphosphate + H(+). Its pathway is tRNA modification. Catalyzes the ATP-dependent 2-thiolation of cytidine in position 32 of tRNA, to form 2-thiocytidine (s(2)C32). The sulfur atoms are provided by the cysteine/cysteine desulfurase (IscS) system. This chain is tRNA-cytidine(32) 2-sulfurtransferase, found in Sorangium cellulosum (strain So ce56) (Polyangium cellulosum (strain So ce56)).